The following is a 541-amino-acid chain: Chaperonin GroEL 2 (541 aa).

Residues 29 to 32 (TLGP), 86 to 90 (DGTTT), G413, 476 to 478 (NAA), and D492 each bind ATP.

Belongs to the chaperonin (HSP60) family. As to quaternary structure, forms a cylinder of 14 subunits composed of two heptameric rings stacked back-to-back. Interacts with the co-chaperonin GroES.

The protein localises to the cytoplasm. The enzyme catalyses ATP + H2O + a folded polypeptide = ADP + phosphate + an unfolded polypeptide.. Functionally, together with its co-chaperonin GroES, plays an essential role in assisting protein folding. The GroEL-GroES system forms a nano-cage that allows encapsulation of the non-native substrate proteins and provides a physical environment optimized to promote and accelerate protein folding. This chain is Chaperonin GroEL 2, found in Streptomyces coelicolor (strain ATCC BAA-471 / A3(2) / M145).